A 504-amino-acid polypeptide reads, in one-letter code: Cytochrome P450 2D10 (504 aa).

Ser249 is subject to Phosphoserine. Residue Cys446 participates in heme binding.

Belongs to the cytochrome P450 family. It depends on heme as a cofactor.

The protein localises to the endoplasmic reticulum membrane. Its subcellular location is the microsome membrane. It carries out the reaction an organic molecule + reduced [NADPH--hemoprotein reductase] + O2 = an alcohol + oxidized [NADPH--hemoprotein reductase] + H2O + H(+). Its function is as follows. Cytochromes P450 are a group of heme-thiolate monooxygenases. In liver microsomes, this enzyme is involved in an NADPH-dependent electron transport pathway. It oxidizes a variety of structurally unrelated compounds, including steroids, fatty acids, and xenobiotics. The chain is Cytochrome P450 2D10 (Cyp2d10) from Mus musculus (Mouse).